The chain runs to 401 residues: Argininosuccinate synthase (401 aa).

Residues 10–18 (AYSGGVDTS) and Ala38 contribute to the ATP site. Tyr89 contributes to the L-citrulline binding site. Position 119 (Gly119) interacts with ATP. Residues Thr121, Asn125, and Asp126 each contribute to the L-aspartate site. Position 125 (Asn125) interacts with L-citrulline. Positions 129, 177, 186, 262, and 274 each coordinate L-citrulline.

This sequence belongs to the argininosuccinate synthase family. Type 1 subfamily. As to quaternary structure, homotetramer.

Its subcellular location is the cytoplasm. The catalysed reaction is L-citrulline + L-aspartate + ATP = 2-(N(omega)-L-arginino)succinate + AMP + diphosphate + H(+). It participates in amino-acid biosynthesis; L-arginine biosynthesis; L-arginine from L-ornithine and carbamoyl phosphate: step 2/3. The sequence is that of Argininosuccinate synthase from Prochlorococcus marinus (strain MIT 9313).